The chain runs to 243 residues: MSDDASTPAAERIPNKGKLAKDLNEVIRYTLWSVFKLKDTLPEDRAGYADEVQELFDQLAAKDVTIRGTYDLSGLRADADLMIWWHAETADQLQEAYNLFRRTKLGRALEPVWSNMALHRPAEFNRSHIPAFLADETPRNYISVYPFVRSYDWYLLPDEDRRRMLADHGKMARGYPDVRANTVASFSLGDYEWILAFEADELHRIVDLMRHLRGSEARRHVREEIPFYTGRRKDIGELVAGLA.

Tyr-145 is a catalytic residue. His-168 provides a ligand contact to Fe-coproporphyrin III.

The protein belongs to the ChdC family. Type 2 subfamily. Requires Fe-coproporphyrin III as cofactor.

The enzyme catalyses Fe-coproporphyrin III + 2 H2O2 + 2 H(+) = heme b + 2 CO2 + 4 H2O. It catalyses the reaction Fe-coproporphyrin III + H2O2 + H(+) = harderoheme III + CO2 + 2 H2O. The catalysed reaction is harderoheme III + H2O2 + H(+) = heme b + CO2 + 2 H2O. It functions in the pathway porphyrin-containing compound metabolism; protoheme biosynthesis. Involved in coproporphyrin-dependent heme b biosynthesis. Catalyzes the decarboxylation of Fe-coproporphyrin III (coproheme) to heme b (protoheme IX), the last step of the pathway. The reaction occurs in a stepwise manner with a three-propionate intermediate. In Streptomyces coelicolor (strain ATCC BAA-471 / A3(2) / M145), this protein is Coproheme decarboxylase.